The following is a 162-amino-acid chain: MKVVLQRVSEASVDVVNELGTLDPTFEPQQIGPGFMILVGVTDGDGDKQIAWLAHKILNLRVFEDAQGKMNRSIQDIGGEILSISQFTLFADVHKGNRPSFIKAGKPEHADLMWIKFNEALRSGGVPVKEGRFGAHMRVGLVNDGPVTIVIDTEHDMPDGTR.

The short motif at 145–146 (GP) is the Gly-cisPro motif, important for rejection of L-amino acids element.

This sequence belongs to the DTD family. In terms of assembly, homodimer.

It is found in the cytoplasm. The enzyme catalyses glycyl-tRNA(Ala) + H2O = tRNA(Ala) + glycine + H(+). The catalysed reaction is a D-aminoacyl-tRNA + H2O = a tRNA + a D-alpha-amino acid + H(+). An aminoacyl-tRNA editing enzyme that deacylates mischarged D-aminoacyl-tRNAs. Also deacylates mischarged glycyl-tRNA(Ala), protecting cells against glycine mischarging by AlaRS. Acts via tRNA-based rather than protein-based catalysis; rejects L-amino acids rather than detecting D-amino acids in the active site. By recycling D-aminoacyl-tRNA to D-amino acids and free tRNA molecules, this enzyme counteracts the toxicity associated with the formation of D-aminoacyl-tRNA entities in vivo and helps enforce protein L-homochirality. This Bifidobacterium longum (strain NCC 2705) protein is D-aminoacyl-tRNA deacylase.